The following is a 489-amino-acid chain: Coiled-coil domain-containing protein 77 (489 aa).

S38 carries the phosphoserine modification. 2 coiled-coil regions span residues 57-120 and 212-487; these read SQEL…QVCL and ERHQ…NALR.

In Mus musculus (Mouse), this protein is Coiled-coil domain-containing protein 77 (Ccdc77).